We begin with the raw amino-acid sequence, 556 residues long: 2-succinyl-5-enolpyruvyl-6-hydroxy-3-cyclohexene-1-carboxylate synthase (556 aa).

This sequence belongs to the TPP enzyme family. MenD subfamily. Homodimer. Mg(2+) is required as a cofactor. The cofactor is Mn(2+). Requires thiamine diphosphate as cofactor.

The catalysed reaction is isochorismate + 2-oxoglutarate + H(+) = 5-enolpyruvoyl-6-hydroxy-2-succinyl-cyclohex-3-ene-1-carboxylate + CO2. It functions in the pathway quinol/quinone metabolism; 1,4-dihydroxy-2-naphthoate biosynthesis; 1,4-dihydroxy-2-naphthoate from chorismate: step 2/7. The protein operates within quinol/quinone metabolism; menaquinone biosynthesis. In terms of biological role, catalyzes the thiamine diphosphate-dependent decarboxylation of 2-oxoglutarate and the subsequent addition of the resulting succinic semialdehyde-thiamine pyrophosphate anion to isochorismate to yield 2-succinyl-5-enolpyruvyl-6-hydroxy-3-cyclohexene-1-carboxylate (SEPHCHC). The chain is 2-succinyl-5-enolpyruvyl-6-hydroxy-3-cyclohexene-1-carboxylate synthase from Salmonella gallinarum (strain 287/91 / NCTC 13346).